Reading from the N-terminus, the 1275-residue chain is O-antigen biosynthesis protein RfbC (1275 aa).

Its function is as follows. Involved in O-antigen biosynthesis. This chain is O-antigen biosynthesis protein RfbC (rfbC), found in Myxococcus xanthus.